The primary structure comprises 315 residues: DNA-directed RNA polymerase subunit alpha (315 aa).

An alpha N-terminal domain (alpha-NTD) region spans residues methionine 1–threonine 228. The segment at lysine 245 to aspartate 315 is alpha C-terminal domain (alpha-CTD).

It belongs to the RNA polymerase alpha chain family. Homodimer. The RNAP catalytic core consists of 2 alpha, 1 beta, 1 beta' and 1 omega subunit. When a sigma factor is associated with the core the holoenzyme is formed, which can initiate transcription.

The catalysed reaction is RNA(n) + a ribonucleoside 5'-triphosphate = RNA(n+1) + diphosphate. DNA-dependent RNA polymerase catalyzes the transcription of DNA into RNA using the four ribonucleoside triphosphates as substrates. This chain is DNA-directed RNA polymerase subunit alpha, found in Desulfitobacterium hafniense (strain DSM 10664 / DCB-2).